The sequence spans 394 residues: MRTQVGIIGAGPAGLLLSHLLYLQGIESIIIENRTREEIEGTIRAGVLEQGTVDLMNQMGVGARMMKEGHFHEGFELRFNGRGHRINVHELTGGKYVTVYAQHEVIKDLVAARLQTGGQIHFNVGDVSLHDVDTSSPKIRFRPNKDGELQEIECDFIAGCDGFRGPSRPAIPQSVRKEYQKVYPFSWLGILVEAPPSAHELIYANHERGFALVSTRSPQIQRLYLQVDAQDHIDNWSDDRIWSELHARLETRDGFKLLEGPIFQKGIVSMRSFVCDPMQHGRLFLAGDAAHIVPPTGAKGLNLAAADVQVLARGLEAYYKAGKMEILNRCTEICLRRIWKAERFSWFMTTMLHRDQGHTPFERGIQLAELDYVTSSRAASTSLAENYIGLPMEF.

Residues Glu32, 42-47 (TIRAGV), and Gln102 each bind FAD. Substrate contacts are provided by residues Tyr203, 214–216 (STR), and Tyr224. FAD is bound at residue Asp288. Residue Pro295 coordinates substrate. 301–302 (LN) contributes to the FAD binding site.

Belongs to the aromatic-ring hydroxylase family. FAD serves as cofactor.

It catalyses the reaction 4-hydroxybenzoate + NADH + O2 + H(+) = 3,4-dihydroxybenzoate + NAD(+) + H2O. The catalysed reaction is 4-hydroxybenzoate + NADPH + O2 + H(+) = 3,4-dihydroxybenzoate + NADP(+) + H2O. Functionally, involved in the degradation of 4-hydroxybenzoate (4HB) via the protocatechuate (PCA) 2,3-cleavage pathway. Catalyzes the conversion of 4HB into 2-hydroxypenta-2,4-dienoate (HPD). It is highly specific for 4-hydroxybenzoate, and is able to utilize both NADH and NADPH as electron donors at approximately equal rates. The polypeptide is 4-hydroxybenzoate 3-monooxygenase (NAD(P)H) (praI) (Paenibacillus sp).